We begin with the raw amino-acid sequence, 456 residues long: Signal recognition particle receptor FtsY (456 aa).

Positions 1-26 (MFDGLKKKLNRFRNDVEETAEEKAEA) are enriched in basic and acidic residues. A disordered region spans residues 1 to 163 (MFDGLKKKLN…DEDDSSGPGR (163 aa)). Acidic residues predominate over residues 27-39 (AADEAESDADAEA). Residues 40-62 (ESAPADTDNAAVEPEASEPAAAD) show a composition bias toward low complexity. A compositionally biased stretch (acidic residues) spans 63-81 (PDADAVGDADAGSEADAVD). Positions 82-97 (AADAPADAESSSAAVE) are enriched in low complexity. Residues 112–134 (PDSEVDAGADTGDEPSGEPTADE) are compositionally biased toward acidic residues. GTP-binding positions include 265–272 (GINGVGKT), 347–351 (DTAGR), and 405–408 (TKAD).

This sequence belongs to the GTP-binding SRP family. FtsY subfamily. Part of the signal recognition particle protein translocation system, which is composed of SRP and FtsY.

It is found in the cell membrane. It localises to the cytoplasm. The catalysed reaction is GTP + H2O = GDP + phosphate + H(+). Involved in targeting and insertion of nascent membrane proteins into the cytoplasmic membrane. Acts as a receptor for the complex formed by the signal recognition particle (SRP) and the ribosome-nascent chain (RNC). This is Signal recognition particle receptor FtsY from Haloferax volcanii (strain ATCC 29605 / DSM 3757 / JCM 8879 / NBRC 14742 / NCIMB 2012 / VKM B-1768 / DS2) (Halobacterium volcanii).